Consider the following 358-residue polypeptide: Chorismate synthase (358 aa).

NADP(+) is bound at residue arginine 47. FMN contacts are provided by residues arginine 124–serine 126, asparagine 240–alanine 241, glycine 284, lysine 299–threonine 303, and arginine 325.

It belongs to the chorismate synthase family. In terms of assembly, homotetramer. It depends on FMNH2 as a cofactor.

The catalysed reaction is 5-O-(1-carboxyvinyl)-3-phosphoshikimate = chorismate + phosphate. It functions in the pathway metabolic intermediate biosynthesis; chorismate biosynthesis; chorismate from D-erythrose 4-phosphate and phosphoenolpyruvate: step 7/7. In terms of biological role, catalyzes the anti-1,4-elimination of the C-3 phosphate and the C-6 proR hydrogen from 5-enolpyruvylshikimate-3-phosphate (EPSP) to yield chorismate, which is the branch point compound that serves as the starting substrate for the three terminal pathways of aromatic amino acid biosynthesis. This reaction introduces a second double bond into the aromatic ring system. The protein is Chorismate synthase of Phocaeicola vulgatus (strain ATCC 8482 / DSM 1447 / JCM 5826 / CCUG 4940 / NBRC 14291 / NCTC 11154) (Bacteroides vulgatus).